We begin with the raw amino-acid sequence, 157 residues long: 6,7-dimethyl-8-ribityllumazine synthase (157 aa).

Residues Phe22, 56 to 58 (AFE), and 81 to 83 (VLI) each bind 5-amino-6-(D-ribitylamino)uracil. Residue 86–87 (ET) coordinates (2S)-2-hydroxy-3-oxobutyl phosphate. His89 serves as the catalytic Proton donor. Phe114 contributes to the 5-amino-6-(D-ribitylamino)uracil binding site. Arg128 serves as a coordination point for (2S)-2-hydroxy-3-oxobutyl phosphate.

Belongs to the DMRL synthase family.

It carries out the reaction (2S)-2-hydroxy-3-oxobutyl phosphate + 5-amino-6-(D-ribitylamino)uracil = 6,7-dimethyl-8-(1-D-ribityl)lumazine + phosphate + 2 H2O + H(+). Its pathway is cofactor biosynthesis; riboflavin biosynthesis; riboflavin from 2-hydroxy-3-oxobutyl phosphate and 5-amino-6-(D-ribitylamino)uracil: step 1/2. Functionally, catalyzes the formation of 6,7-dimethyl-8-ribityllumazine by condensation of 5-amino-6-(D-ribitylamino)uracil with 3,4-dihydroxy-2-butanone 4-phosphate. This is the penultimate step in the biosynthesis of riboflavin. This Chlamydia trachomatis serovar L2 (strain ATCC VR-902B / DSM 19102 / 434/Bu) protein is 6,7-dimethyl-8-ribityllumazine synthase.